A 448-amino-acid polypeptide reads, in one-letter code: Beclin-1 (448 aa).

Met1 bears the N-acetylmethionine mark. Phosphoserine is present on residues Ser14 and Ser29. A phosphoserine; by AMPK mark is found at Ser88, Ser91, and Ser94. The BH3 motif lies at 106 to 125 (TMENLSRRLKVTGDLFDIMS). An interaction with BCL2 and BCL2L1 region spans residues 110-157 (LSRRLKVTGDLFDIMSGQTDVDHPLCEECTDTLLDQLDTQLNVTENEC). A Phosphothreonine; by DAPK1 modification is found at Thr117. Residues 140-267 (DTLLDQLDTQ…QLDKLKKTNV (128 aa)) adopt a coiled-coil conformation. The tract at residues 243 to 448 (DELKSVENQM…AWVSSQFYNK (206 aa)) is evolutionary conserved domain (ECD). Residues Lys400 and Lys435 each participate in a glycyl lysine isopeptide (Lys-Gly) (interchain with G-Cter in ubiquitin) cross-link. A required for membrane-association region spans residues 423–448 (WTKALKFMLTNLKWGLAWVSSQFYNK).

This sequence belongs to the beclin family. A homodimeric form is proposed to exist; this metastable form readily transits to ATG14- or UVRAG-containing complexes with BECN1:UVRAG being more stable than BECN1:ATG14. Component of the PI3K (PI3KC3/PI3K-III/class III phosphatidylinositol 3-kinase) complex the core of which is composed of the catalytic subunit PIK3C3, the regulatory subunit PIK3R4 and BECN1 associating with additional regulatory/auxiliary subunits to form alternative complex forms. Alternative complex forms containing a fourth regulatory subunit in a mutually exclusive manner are PI3K complex I (PI3KC3-C1) containing ATG14, and PI3K complex II (PI3KC3-C2) containing UVRAG. PI3KC3-C1 displays a V-shaped architecture with PIK3R4 serving as a bridge between PIK3C3 and the ATG14:BECN1 subcomplex. Both, PI3KC3-C1 and PI3KC3-C2, can associate with further regulatory subunits, such as RUBCN, SH3GLB1/Bif-1 and AMBRA1. PI3KC3-C1 probably associates with PIK3CB. Forms a complex with PPP2CA and AMBRA1; AMBRA1 and BECN1 components of the complex regulate MYC stability via different pathways. Component of the complex, at least composed of LRPPRC, BECN1 and BCL2; the interactions prevent BECN1 from forming an autophagy-inducing complex with PIK3C3. Interacts with AMBRA1, GOPC, GRID2. Interacts with BCL2 and BCL2L1 isoform Bcl-X(L); the interaction inhibits BECN1 function in promoting autophagy by interfering with the formation of the PI3K complex. Interacts with cytosolic HMGB1; inhibits the interaction of BECN1 and BCL2 leading to promotion of autophagy. Interacts with USP10, USP13, VMP1, DAPK1, RAB39A. Interacts with the poly-Gln domain of ATXN3; the interaction causes deubiquitination at Lys-400 and stabilizes BECN1. Interacts with SLAMF1. Interacts with TRIM5; the interaction causes activation of BECN1 by causing its dissociation from its inhibitors BCL2 and TAB2. Interacts with active ULK1 (phosphorylated on 'Ser-317') and MEFV simultaneously. Interacts with WDR81 and WDR91; negatively regulates the PI3 kinase/PI3K activity associated with endosomal membranes. Interacts with LAPTM4B; competes with EGFR for LAPTM4B binding; regulates EGFR activity. Interacts with TRIM50. Interacts with TRIM16. Interacts with ATG14; this interaction is increased in the absence of TMEM39A. Interacts with WASHC1; preventing interaction with AMBRA1 and the DCX(AMBRA1) complex and subsequent ubiquitination. Interacts with TRIM17. Interacts with BCL2L10/BCL-B (via BH1 domain). Interacts with SH3BGRL. Interacts with IRGM; enhancing BECN1-interacting partners and influencing the composition of the BECN1 complex. Interacts with ARMC3. Interacts with LRPPRC. In terms of assembly, (Microbial infection) Interacts with African swine fever virus (ASFV) apoptosis regulator Bcl-2 homolog; this interaction allows the virus to inhibit BECN1, and thus autophagy. In terms of processing, phosphorylation at Thr-117 by DAPK1 reduces its interaction with BCL2 and BCL2L1 and promotes induction of autophagy. In response to autophagic stimuli, phosphorylated at serine residues by AMPK in an ATG14-dependent manner, and this phosphorylation is critical for maximally efficient autophagy. Polyubiquitinated by NEDD4, both with 'Lys-11'- and 'Lys-63'-linkages. 'Lys-11'-linked polyubiquitination leads to degradation and is enhanced when the stabilizing interaction partner VPS34 is depleted. Deubiquitinated by USP10 and USP13, leading to stabilize the PIK3C3/VPS34-containing complexes. Polyubiquitinated at Lys-400 with 'Lys-48'-linkages. 'Lys-48'-linked polyubiquitination of Lys-400 leads to degradation. Deubiquitinated by ATXN3, leading to stabilization. Ubiquitinated at Lys-435 via 'Lys-63'-linkage by the DCX(AMBRA1) complex, thereby increasing the association between BECN1 and PIK3C3 to promote PIK3C3 activity. 'Lys-48'-linked ubiquitination by RNF216 leads to proteasomal degradation and autophagy inhibition. Post-translationally, proteolytically processed by caspases including CASP8 and CASP3; the C-terminal fragments lack autophagy-inducing capacity and are proposed to induce apoptosis. Thus the cleavage is proposed to be an determinant to switch from autophagy to apoptosis pathways affecting cellular homeostasis including viral infections and survival of tumor cells.

The protein resides in the cytoplasm. Its subcellular location is the golgi apparatus. It localises to the trans-Golgi network membrane. The protein localises to the endosome membrane. It is found in the endoplasmic reticulum membrane. The protein resides in the mitochondrion membrane. Its subcellular location is the cytoplasmic vesicle. It localises to the autophagosome. The protein localises to the mitochondrion. It is found in the nucleus. In terms of biological role, plays a central role in autophagy. Acts as a core subunit of the PI3K complex that mediates formation of phosphatidylinositol 3-phosphate; different complex forms are believed to play a role in multiple membrane trafficking pathways: PI3KC3-C1 is involved in initiation of autophagosomes and PI3KC3-C2 in maturation of autophagosomes and endocytosis. Involved in regulation of degradative endocytic trafficking and required for the abscission step in cytokinesis, probably in the context of PI3KC3-C2. Essential for the formation of PI3KC3-C2 but not PI3KC3-C1 PI3K complex forms. Involved in endocytosis. May play a role in antiviral host defense. Functionally, beclin-1-C 35 kDa localized to mitochondria can promote apoptosis; it induces the mitochondrial translocation of BAX and the release of proapoptotic factors. This is Beclin-1 (BECN1) from Sus scrofa (Pig).